The chain runs to 246 residues: NH(3)-dependent NAD(+) synthetase (246 aa).

29 to 36 (GLSGGIDS) contributes to the ATP binding site. Asp-35 is a Mg(2+) binding site. Residue Arg-110 coordinates deamido-NAD(+). An ATP-binding site is contributed by Thr-130. Glu-135 serves as a coordination point for Mg(2+). Residues Lys-159 and Ser-181 each contribute to the ATP site.

Belongs to the NAD synthetase family. Homodimer.

It catalyses the reaction deamido-NAD(+) + NH4(+) + ATP = AMP + diphosphate + NAD(+) + H(+). The protein operates within cofactor biosynthesis; NAD(+) biosynthesis; NAD(+) from deamido-NAD(+) (ammonia route): step 1/1. In terms of biological role, catalyzes the ATP-dependent amidation of deamido-NAD to form NAD. Uses ammonia as a nitrogen source. This Campylobacter jejuni subsp. jejuni serotype O:23/36 (strain 81-176) protein is NH(3)-dependent NAD(+) synthetase.